The chain runs to 276 residues: Formamidopyrimidine-DNA glycosylase (276 aa).

The active-site Schiff-base intermediate with DNA is Pro-2. Glu-3 (proton donor) is an active-site residue. The active-site Proton donor; for beta-elimination activity is the Lys-58. The DNA site is built by His-94, Arg-112, and Arg-157. An FPG-type zinc finger spans residues Phe-242–Arg-276. Catalysis depends on Arg-266, which acts as the Proton donor; for delta-elimination activity.

It belongs to the FPG family. Monomer. It depends on Zn(2+) as a cofactor.

It catalyses the reaction Hydrolysis of DNA containing ring-opened 7-methylguanine residues, releasing 2,6-diamino-4-hydroxy-5-(N-methyl)formamidopyrimidine.. The enzyme catalyses 2'-deoxyribonucleotide-(2'-deoxyribose 5'-phosphate)-2'-deoxyribonucleotide-DNA = a 3'-end 2'-deoxyribonucleotide-(2,3-dehydro-2,3-deoxyribose 5'-phosphate)-DNA + a 5'-end 5'-phospho-2'-deoxyribonucleoside-DNA + H(+). Its function is as follows. Involved in base excision repair of DNA damaged by oxidation or by mutagenic agents. Acts as a DNA glycosylase that recognizes and removes damaged bases. Has a preference for oxidized purines, such as 7,8-dihydro-8-oxoguanine (8-oxoG). Has AP (apurinic/apyrimidinic) lyase activity and introduces nicks in the DNA strand. Cleaves the DNA backbone by beta-delta elimination to generate a single-strand break at the site of the removed base with both 3'- and 5'-phosphates. In Paraburkholderia xenovorans (strain LB400), this protein is Formamidopyrimidine-DNA glycosylase.